A 177-amino-acid polypeptide reads, in one-letter code: F(420)H(2) dehydrogenase subunit I (177 aa).

The segment at 1–21 is disordered; that stretch reads MGCPEVQDRPGSGYELEETPA. 4Fe-4S ferredoxin-type domains are found at residues 76–105 and 116–145; these read GLQT…IVKA and WFPQ…SGKE. Positions 85, 88, 91, 95, 125, 128, 131, and 135 each coordinate [4Fe-4S] cluster.

This sequence belongs to the complex I 23 kDa subunit family. As to quaternary structure, the FPO complex is composed of at least 13 different subunits. Requires [4Fe-4S] cluster as cofactor.

The enzyme catalyses methanophenazine + reduced coenzyme F420-(gamma-L-Glu)(n) = dihydromethanophenazine + oxidized coenzyme F420-(gamma-L-Glu)(n) + H(+). Component of the F(420)H(2) dehydrogenase (FPO complex) which is part of the energy-conserving F(420)H(2):heterodisulfide oxidoreductase system. The membrane-bound electron transfer system of the complex plays an important role in the metabolism of methylotrophic methanogens when the organisms grow on methanol or methylamines. Catalyzes the oxidation of methanophenazine to dihydromethanophenazine. It shuttles electrons from F(420)H(2), via FAD and iron-sulfur (Fe-S) centers, to methanophenazine (an electron carrier in the membrane). It couples the redox reaction to proton translocation (for every two electrons transferred, two hydrogen ions are translocated across the cytoplasmic membrane), and thus conserves the redox energy in a proton gradient. It also catalyzes the oxidation of F(420)H(2) with quinones such as 2,3-dimethyl-1,4-naphthoquinone, 2-methyl-1,4-naphthoquinone and tetramethyl-p-benzoquinone. The sequence is that of F(420)H(2) dehydrogenase subunit I (fpoI) from Methanosarcina mazei (strain ATCC BAA-159 / DSM 3647 / Goe1 / Go1 / JCM 11833 / OCM 88) (Methanosarcina frisia).